Here is a 279-residue protein sequence, read N- to C-terminus: MSETDTIVKGWHGKLNLVYADRSNSTQLIYNHQQAPLKVQRPFYPEGEKVCHSVILHTAGGVVGGDRLSYNLHLQPNAQALITTAAAGKVYRSDGLQARQTIEIKIDAGACLEWLPQETILFNGAIYRQDLRVELATGANFLGWEITRFGRSARGEKFYQGEWRSHTEIWQQGVPLWIDRQWLPGNDAVFHSPHGLAGQPIVGSLVWLGSPISTEIIEKARNLGNTQGEAGVTSLENGFLCRYRGASTSEVRNWFTSVWQLLRGEFFSRGKCIPRVWQT.

It belongs to the UreD family. As to quaternary structure, ureD, UreF and UreG form a complex that acts as a GTP-hydrolysis-dependent molecular chaperone, activating the urease apoprotein by helping to assemble the nickel containing metallocenter of UreC. The UreE protein probably delivers the nickel.

The protein resides in the cytoplasm. Required for maturation of urease via the functional incorporation of the urease nickel metallocenter. This Nostoc sp. (strain PCC 7120 / SAG 25.82 / UTEX 2576) protein is Urease accessory protein UreD.